The primary structure comprises 269 residues: Phosphatidylglycerol--prolipoprotein diacylglyceryl transferase (269 aa).

Transmembrane regions (helical) follow at residues 17–37 (LKIHWYGLMYLIGIGGAWLLA), 56–76 (LVFWLSMGVIVGGRLGYVLFY), 92–112 (WKGGMSFHGGFIGVMLAALWF), 120–140 (FFELMDFVAPLVPIGLGAGRI), 174–194 (PSQLYQFALEGVALFVILWLY), 202–222 (MAVSGMFALFYGIFRFIVEFV), and 237–257 (LTMGQLLCVPMIVGGLFLIWL). An a 1,2-diacyl-sn-glycero-3-phospho-(1'-sn-glycerol)-binding site is contributed by arginine 139.

This sequence belongs to the Lgt family.

It localises to the cell inner membrane. It carries out the reaction L-cysteinyl-[prolipoprotein] + a 1,2-diacyl-sn-glycero-3-phospho-(1'-sn-glycerol) = an S-1,2-diacyl-sn-glyceryl-L-cysteinyl-[prolipoprotein] + sn-glycerol 1-phosphate + H(+). Its pathway is protein modification; lipoprotein biosynthesis (diacylglyceryl transfer). Its function is as follows. Catalyzes the transfer of the diacylglyceryl group from phosphatidylglycerol to the sulfhydryl group of the N-terminal cysteine of a prolipoprotein, the first step in the formation of mature lipoproteins. The polypeptide is Phosphatidylglycerol--prolipoprotein diacylglyceryl transferase (Pseudomonas putida (strain W619)).